We begin with the raw amino-acid sequence, 142 residues long: Large ribosomal subunit protein uL23 (142 aa).

Belongs to the universal ribosomal protein uL23 family.

The chain is Large ribosomal subunit protein uL23 (RPL25) from Kluyveromyces lactis (strain ATCC 8585 / CBS 2359 / DSM 70799 / NBRC 1267 / NRRL Y-1140 / WM37) (Yeast).